The sequence spans 766 residues: Pentatricopeptide repeat-containing protein At5g28460 (766 aa).

PPR repeat units follow at residues 151–181 (TIVA…LDSN), 184–218 (NSQV…ESVF), 221–257 (NRIT…GVSP), 258–292 (NSVW…KTPL), 293–327 (EAPP…KIRP), 328–358 (DVVT…MRGK), 369–404 (DSIH…RCVP), 405–439 (NAVT…EIKP), 440–474 (NVVT…GVKG), 475–509 (NVVT…GCSP), 510–544 (DAKI…GFSL), 545–579 (DLLA…GKKP), 580–614 (DSIT…GLDP), 615–650 (TVTT…KVNP), 651–685 (NTVI…MVRP), and 686–720 (NVET…SCEP).

Belongs to the PPR family. P subfamily.

This chain is Pentatricopeptide repeat-containing protein At5g28460, found in Arabidopsis thaliana (Mouse-ear cress).